A 143-amino-acid chain; its full sequence is Nucleoside diphosphate kinase (143 aa).

Lys-11, Phe-59, Arg-87, Thr-93, Arg-104, and Asn-114 together coordinate ATP. His-117 functions as the Pros-phosphohistidine intermediate in the catalytic mechanism.

It belongs to the NDK family. Homotetramer. Mg(2+) serves as cofactor.

Its subcellular location is the cytoplasm. The enzyme catalyses a 2'-deoxyribonucleoside 5'-diphosphate + ATP = a 2'-deoxyribonucleoside 5'-triphosphate + ADP. It catalyses the reaction a ribonucleoside 5'-diphosphate + ATP = a ribonucleoside 5'-triphosphate + ADP. Major role in the synthesis of nucleoside triphosphates other than ATP. The ATP gamma phosphate is transferred to the NDP beta phosphate via a ping-pong mechanism, using a phosphorylated active-site intermediate. This Klebsiella pneumoniae (strain 342) protein is Nucleoside diphosphate kinase.